The sequence spans 539 residues: Acid-sensing ion channel 4 (539 aa).

Over 1 to 68 (MPIEIVCKIK…GPGPHGLRRT (68 aa)) the chain is Cytoplasmic. The chain crosses the membrane as a helical span at residues 69–89 (LWALALLTSLAAFLYQAASLA). The Extracellular portion of the chain corresponds to 90-438 (RGYLTRPHLV…EQQAAYGLSA (349 aa)). Intrachain disulfides connect cysteine 118–cysteine 202 and cysteine 180–cysteine 187. Asparagine 191, asparagine 243, asparagine 341, and asparagine 376 each carry an N-linked (GlcNAc...) asparagine glycan. Cystine bridges form between cysteine 296–cysteine 375, cysteine 318–cysteine 371, cysteine 322–cysteine 369, cysteine 331–cysteine 353, and cysteine 333–cysteine 345. The helical transmembrane segment at 439–459 (LLGDLGGQMGLFIGASILTLL) threads the bilayer. Positions 452–454 (GAS) match the GAS motif; ion selectivity filter motif. At 460-539 (EILDYIYEVS…PGSLFEDFAC (80 aa)) the chain is on the cytoplasmic side. Residues 500–531 (KEQSPCPSRGRAEGGGASSLLPNHHHPHGPPG) form a disordered region.

This sequence belongs to the amiloride-sensitive sodium channel (TC 1.A.6) family. ASIC4 subfamily. As to quaternary structure, homotrimer. Heterotrimer; with other ASIC proteins producing functional channels.

The protein localises to the cell membrane. In terms of biological role, does not exhibit measurable stand-alone pH-gated sodium channel activity but may form pH-gated heterotrimeric sodium channels. Its activity could also depend on alternative gating mechanisms. The polypeptide is Acid-sensing ion channel 4 (Mus musculus (Mouse)).